A 64-amino-acid polypeptide reads, in one-letter code: uncharacterized protein (64 aa).

A helical membrane pass occupies residues 33–55; the sequence is YTPLGSYMIFGIVHYFCSYHIGI.

The protein resides in the membrane. This is an uncharacterized protein from Saccharomyces cerevisiae (strain ATCC 204508 / S288c) (Baker's yeast).